The chain runs to 548 residues: MASAAVANYEEEIVRPVADFSPSLWGDQFLSFSIDNQIAEKYAQEIEALKEQTRSMLLATARKLADTLNLIDTIERLGIAYHFEKEIDEILDQIYNQNSTFDDLCTSALQFRLLRQHGFNISPQIFSKFQDENGKFKESLASDVLGLLNLYEASHVRTHTDNILEDALAFSTVHLESAAPYMNSPLREQVTHALEQCLHKGVPRVETRFFISSIYEKEESKNDMLLRFAKLDFNLLQMLHKQELAEVSRWWKDLNFVTTLPYARDRVVECYFWALGVYFEPQYSQARVMLVKTISMISIVDDTFDAYGTVKELEAYTDAIQRWDINEIDRLPDYMKISYKAILDLYKDYEKELSSAGRSHIVCHAIERMKEVVRNYNVESTWFIEGYKPPVSEYLSNALATTTYYYLATTSYLGMKSVAEQDFEWLSKNPKILEASVIICRVIDDTATYEVEKSRGQIATGIECCMRDYGVSTKEAMDKFQKMAETAWKDLNEGLLRPTPISAEFLTPILNLARIVEVTYIHNLDGYTHPEKVLKPHIIDLLVESIQI.

Mg(2+)-binding residues include aspartate 301, aspartate 305, aspartate 444, threonine 448, and glutamate 452. The DDXXD motif motif lies at 301–305 (DDTFD).

Belongs to the terpene synthase family. As to quaternary structure, monomer. The cofactor is Mg(2+). Expressed in roots, but not in shoots.

The protein resides in the cytoplasm. It carries out the reaction (2E,6E)-farnesyl diphosphate = (+)-5-epi-aristolochene + diphosphate. Its pathway is secondary metabolite biosynthesis; terpenoid biosynthesis. Its function is as follows. Catalyzes the cyclization of trans,trans-farnesyl diphosphate (FPP) to the bicyclic intermediate 5-epi-aristolochene, initial step in the conversion of FPP to the sesquiterpenoid antifungal phytoalexin capsidiol. Produces germacrene A as an enzyme-bound intermediate that is not released by the enzyme, but is further cyclized to produce the bicyclic 5-epi-aristolochene. This chain is 5-epi-aristolochene synthase 2, found in Nicotiana attenuata (Coyote tobacco).